The primary structure comprises 261 residues: Carnitinyl-CoA dehydratase (261 aa).

Glu111 serves as the catalytic Nucleophile. Glu131 (proton acceptor) is an active-site residue.

The protein belongs to the enoyl-CoA hydratase/isomerase family.

It carries out the reaction (R)-carnitinyl-CoA = crotonobetainyl-CoA + H2O. Its pathway is amine and polyamine metabolism; carnitine metabolism. Catalyzes the reversible dehydration of L-carnitinyl-CoA to crotonobetainyl-CoA. The chain is Carnitinyl-CoA dehydratase from Proteus mirabilis (strain HI4320).